We begin with the raw amino-acid sequence, 329 residues long: Ubiquinol oxidase 1c, mitochondrial (329 aa).

The transit peptide at 1 to 45 (MITTLLRRSLLDASKQATSINGILFHQLAPAKYFRVPAVGGLRDF) directs the protein to the mitochondrion. A helical transmembrane segment spans residues 154-174 (AIMLETVAAVPGMVGGMLMHF). 3 residues coordinate Fe cation: glutamate 158, glutamate 197, and histidine 200. Residues 216–236 (ALVISVQGVFFNAYLIGYIIS) traverse the membrane as a helical segment. Fe cation-binding residues include glutamate 248, glutamate 299, and histidine 302.

It belongs to the alternative oxidase family. As to quaternary structure, homodimer; disulfide-linked. It depends on Fe cation as a cofactor. As to expression, expressed in roots, stems, leaves, cotyledons and flowers. High expression in stamens.

It localises to the mitochondrion inner membrane. The catalysed reaction is 2 a ubiquinol + O2 = 2 a ubiquinone + 2 H2O. Catalyzes the cyanide-resistant oxidation of ubiquinol and the reduction of molecular oxygen to water, but does not translocate protons and consequently is not linked to oxidative phosphorylation. May increase respiration when the cytochrome respiratory pathway is restricted, or in response to low temperatures. In Arabidopsis thaliana (Mouse-ear cress), this protein is Ubiquinol oxidase 1c, mitochondrial (AOX1C).